A 117-amino-acid polypeptide reads, in one-letter code: Immunoglobulin heavy variable 1-3 (117 aa).

Positions 1–19 (MDWTWRILFLVAAATGAHS) are cleaved as a signal peptide. Positions 20 to 44 (QVQLVQSGAEVKKPGASVKVSCKAS) are framework-1. Residues 20 to 117 (QVQLVQSGAE…EDTAVYYCAR (98 aa)) enclose the Ig-like domain. The cysteines at positions 41 and 115 are disulfide-linked. A complementarity-determining-1 region spans residues 45–52 (GYTFTSYA). Residues 53–69 (MHWVRQAPGQRLEWMGW) are framework-2. Positions 70 to 77 (INAGNGNT) are complementarity-determining-2. Residues 78-115 (KYSQKFQGRVTITRDTSASTAYMELSSLRSEDTAVYYC) form a framework-3 region. Residues 116–117 (AR) are complementarity-determining-3.

In terms of assembly, immunoglobulins are composed of two identical heavy chains and two identical light chains; disulfide-linked.

Its subcellular location is the secreted. It localises to the cell membrane. Its function is as follows. V region of the variable domain of immunoglobulin heavy chains that participates in the antigen recognition. Immunoglobulins, also known as antibodies, are membrane-bound or secreted glycoproteins produced by B lymphocytes. In the recognition phase of humoral immunity, the membrane-bound immunoglobulins serve as receptors which, upon binding of a specific antigen, trigger the clonal expansion and differentiation of B lymphocytes into immunoglobulins-secreting plasma cells. Secreted immunoglobulins mediate the effector phase of humoral immunity, which results in the elimination of bound antigens. The antigen binding site is formed by the variable domain of one heavy chain, together with that of its associated light chain. Thus, each immunoglobulin has two antigen binding sites with remarkable affinity for a particular antigen. The variable domains are assembled by a process called V-(D)-J rearrangement and can then be subjected to somatic hypermutations which, after exposure to antigen and selection, allow affinity maturation for a particular antigen. This chain is Immunoglobulin heavy variable 1-3, found in Homo sapiens (Human).